We begin with the raw amino-acid sequence, 356 residues long: Alanine racemase, catabolic (356 aa).

Lys35 serves as the catalytic Proton acceptor; specific for D-alanine. Lys35 carries the post-translational modification N6-(pyridoxal phosphate)lysine. Arg130 contributes to the substrate binding site. Tyr253 acts as the Proton acceptor; specific for L-alanine in catalysis. Met301 is a substrate binding site.

The protein belongs to the alanine racemase family. It depends on pyridoxal 5'-phosphate as a cofactor.

It carries out the reaction L-alanine = D-alanine. Isomerizes L-alanine to D-alanine which is then oxidized to pyruvate by DadA. The sequence is that of Alanine racemase, catabolic (dadX) from Escherichia coli O6:H1 (strain CFT073 / ATCC 700928 / UPEC).